The sequence spans 452 residues: Bifunctional protein GlmU (452 aa).

The interval 1–226 (MSLSVVILAA…ATEVEGVNTR (226 aa)) is pyrophosphorylase. UDP-N-acetyl-alpha-D-glucosamine is bound by residues 8–11 (LAAG), Lys-22, Gln-73, 78–79 (GT), 100–102 (YGD), Gly-137, Glu-151, Asn-166, and Asn-224. Asp-102 provides a ligand contact to Mg(2+). Residue Asn-224 participates in Mg(2+) binding. The tract at residues 227 to 247 (LQLANLERAYQLKKATELLLS) is linker. The interval 248 to 452 (GVMLRDPNRF…INNWKRPTKK (205 aa)) is N-acetyltransferase. Residues Arg-330 and Lys-348 each contribute to the UDP-N-acetyl-alpha-D-glucosamine site. His-360 functions as the Proton acceptor in the catalytic mechanism. Positions 363 and 374 each coordinate UDP-N-acetyl-alpha-D-glucosamine. Residues Ala-377, 383–384 (NY), Ser-402, Ala-420, and Arg-437 contribute to the acetyl-CoA site.

This sequence in the N-terminal section; belongs to the N-acetylglucosamine-1-phosphate uridyltransferase family. It in the C-terminal section; belongs to the transferase hexapeptide repeat family. As to quaternary structure, homotrimer. It depends on Mg(2+) as a cofactor.

It localises to the cytoplasm. It catalyses the reaction alpha-D-glucosamine 1-phosphate + acetyl-CoA = N-acetyl-alpha-D-glucosamine 1-phosphate + CoA + H(+). The catalysed reaction is N-acetyl-alpha-D-glucosamine 1-phosphate + UTP + H(+) = UDP-N-acetyl-alpha-D-glucosamine + diphosphate. It participates in nucleotide-sugar biosynthesis; UDP-N-acetyl-alpha-D-glucosamine biosynthesis; N-acetyl-alpha-D-glucosamine 1-phosphate from alpha-D-glucosamine 6-phosphate (route II): step 2/2. Its pathway is nucleotide-sugar biosynthesis; UDP-N-acetyl-alpha-D-glucosamine biosynthesis; UDP-N-acetyl-alpha-D-glucosamine from N-acetyl-alpha-D-glucosamine 1-phosphate: step 1/1. It functions in the pathway bacterial outer membrane biogenesis; LPS lipid A biosynthesis. Functionally, catalyzes the last two sequential reactions in the de novo biosynthetic pathway for UDP-N-acetylglucosamine (UDP-GlcNAc). The C-terminal domain catalyzes the transfer of acetyl group from acetyl coenzyme A to glucosamine-1-phosphate (GlcN-1-P) to produce N-acetylglucosamine-1-phosphate (GlcNAc-1-P), which is converted into UDP-GlcNAc by the transfer of uridine 5-monophosphate (from uridine 5-triphosphate), a reaction catalyzed by the N-terminal domain. This is Bifunctional protein GlmU from Psychromonas ingrahamii (strain DSM 17664 / CCUG 51855 / 37).